Consider the following 1402-residue polypeptide: Phospholipid-transporting ATPase dnf2 (1402 aa).

A run of 4 helical transmembrane segments spans residues 109–129, 135–155, 457–477, and 501–521; these read FQNV…ISIF, PGLA…KDAI, LNFI…GIAW, and VVTF…SLYI. The active-site 4-aspartylphosphate intermediate is the Asp569. Residues Asp569, Lys570, Thr571, Glu700, Phe741, Ser743, Lys746, Lys764, Arg799, Thr800, Thr879, Gly880, Asp881, Arg986, and Lys992 each coordinate ATP. Asp569 provides a ligand contact to Mg(2+). Thr571 serves as a coordination point for Mg(2+). Mg(2+) is bound at residue Asp1012. ATP contacts are provided by Asn1015 and Asp1016. A Mg(2+)-binding site is contributed by Asp1016. 6 helical membrane passes run 1066–1086, 1101–1121, 1151–1171, 1193–1213, 1218–1238, and 1260–1280; these read VAEM…TLFW, YTYV…VMGV, IFIG…FFSF, LGVY…ILNQ, VFSI…TGVY, and FWAV…LFMT. An a 1,2-diacyl-sn-glycero-3-phospho-L-serine-binding site is contributed by Lys1275.

Belongs to the cation transport ATPase (P-type) (TC 3.A.3) family. Type IV subfamily. Mg(2+) is required as a cofactor.

Its subcellular location is the cell membrane. The protein resides in the endoplasmic reticulum membrane. The catalysed reaction is ATP + H2O + phospholipidSide 1 = ADP + phosphate + phospholipidSide 2.. It carries out the reaction a 1,2-diacyl-sn-glycero-3-phosphoethanolamine(out) + ATP + H2O = a 1,2-diacyl-sn-glycero-3-phosphoethanolamine(in) + ADP + phosphate + H(+). The enzyme catalyses a 1,2-diacyl-sn-glycero-3-phosphocholine(out) + ATP + H2O = a 1,2-diacyl-sn-glycero-3-phosphocholine(in) + ADP + phosphate + H(+). It catalyses the reaction a beta-D-glucosyl-(1&lt;-&gt;1')-N-acylsphing-4-enine(out) + ATP + H2O = a beta-D-glucosyl-(1&lt;-&gt;1')-N-acylsphing-4-enine(in) + ADP + phosphate + H(+). The catalysed reaction is a 1,2-diacyl-sn-glycero-3-phospho-L-serine(out) + ATP + H2O = a 1,2-diacyl-sn-glycero-3-phospho-L-serine(in) + ADP + phosphate + H(+). Catalytic component of a P4-ATPase flippase complex which catalyzes the hydrolysis of ATP coupled to the transport of glucosylceramide, phosphatidylcholine, phosphatidylethanolamine, and small amounts of phosphatidylserine from the lumenal to the cytosolic leaflet of the cell membrane and ensures the maintenance of asymmetric distribution of phospholipids. In Schizosaccharomyces pombe (strain 972 / ATCC 24843) (Fission yeast), this protein is Phospholipid-transporting ATPase dnf2.